Here is a 165-residue protein sequence, read N- to C-terminus: uncharacterized protein (165 aa).

The chain crosses the membrane as a helical span at residues 15–35 (MSPAIILIGVLILIVLFVIKF). Positions 67–119 (ISQLNTLRATLAAKKKELKTLRTARKKECTEQLAKTQAEVDRIQAKIDNFSSR) form a coiled coil. A disordered region spans residues 123-156 (VPLPGGEVGPPYNPPPPRTNTRPNPRPNPRPAQL). Residues 133–154 (PYNPPPPRTNTRPNPRPNPRPA) are compositionally biased toward pro residues.

The protein localises to the membrane. This is an uncharacterized protein from Acheta domesticus (House cricket).